We begin with the raw amino-acid sequence, 269 residues long: 5'-nucleotidase SurE (269 aa).

A divalent metal cation is bound by residues aspartate 11, aspartate 12, serine 43, and asparagine 101.

This sequence belongs to the SurE nucleotidase family. Requires a divalent metal cation as cofactor.

It localises to the cytoplasm. The enzyme catalyses a ribonucleoside 5'-phosphate + H2O = a ribonucleoside + phosphate. Functionally, nucleotidase that shows phosphatase activity on nucleoside 5'-monophosphates. This is 5'-nucleotidase SurE from Prochlorococcus marinus (strain MIT 9313).